Reading from the N-terminus, the 489-residue chain is Interferon gamma receptor 1 (489 aa).

Positions 1–17 are cleaved as a signal peptide; that stretch reads MALLFLLPLVMQGVSRA. The Extracellular segment spans residues 18–245; the sequence is EMGTADLGPS…ITIFNSSIKG (228 aa). N-linked (GlcNAc...) asparagine glycans are attached at residues asparagine 34, asparagine 79, and asparagine 86. Residues cysteine 77 and cysteine 85 are joined by a disulfide bond. An intrachain disulfide couples cysteine 122 to cysteine 167. N-linked (GlcNAc...) asparagine glycosylation occurs at asparagine 179. 2 disulfide bridges follow: cysteine 195/cysteine 200 and cysteine 214/cysteine 235. The N-linked (GlcNAc...) asparagine glycan is linked to asparagine 240. A helical membrane pass occupies residues 246–266; sequence SLWIPVVAALLLFLVLSLVFI. The Cytoplasmic segment spans residues 267 to 489; the sequence is CFYIKKINPL…RPTEDSKEFS (223 aa). A disordered region spans residues 329–437; the sequence is ATVPGMHTED…SEFPPNNKGE (109 aa). Over residues 335 to 348 the composition is skewed to basic and acidic residues; sequence HTEDNPGKVEHTEE. Positions 349–360 are enriched in polar residues; it reads LSSITEVVTTEE. The residue at position 369 (serine 369) is a Phosphoserine. The residue at position 372 (threonine 372) is a Phosphothreonine. The residue at position 378 (serine 378) is a Phosphoserine. Residues 379–391 show a composition bias toward low complexity; it reads SSPLSSNQSEPGS. Over residues 401–412 the composition is skewed to basic and acidic residues; the sequence is NCSESDHSRNGF. Serine 403 is modified (phosphoserine). Residues 415-429 are compositionally biased toward low complexity; that stretch reads DSSCLESHSSLSDSE. Tyrosine 457 carries the post-translational modification Phosphotyrosine.

This sequence belongs to the type II cytokine receptor family. Monomer. Heterodimer with IFNGR2, to form the IFNG receptor complex. Interacts with JAK1. Interacts (when phosphorylated) with STAT1. Interacts with SOCS1. Post-translationally, phosphorylated at Ser/Thr residues. Phosphorylation of Tyr-457 is required for IFNG receptor signal transduction. Influenza virus infection leads to phosphorylation in a CSNK1A1-dependent manner. Ubiquitinated after phosphorylation in a CSNK1A1-dependent manner, leading to the lysosome-dependent degradation. Proteasomally degraded through 'Lys-48'-mediated ubiquitination. Ubiquitination is necessary for efficient IFNGR1 signaling.

The protein resides in the cell membrane. Receptor subunit for interferon gamma/INFG that plays crucial roles in antimicrobial, antiviral, and antitumor responses by activating effector immune cells and enhancing antigen presentation. Associates with transmembrane accessory factor IFNGR2 to form a functional receptor. Upon ligand binding, the intracellular domain of IFNGR1 opens out to allow association of downstream signaling components JAK1 and JAK2. In turn, activated JAK1 phosphorylates IFNGR1 to form a docking site for STAT1. Subsequent phosphorylation of STAT1 leads to dimerization, translocation to the nucleus, and stimulation of target gene transcription. STAT3 can also be activated in a similar manner although activation seems weaker. IFNGR1 intracellular domain phosphorylation also provides a docking site for SOCS1 that regulates the JAK-STAT pathway by competing with STAT1 binding to IFNGR1. The chain is Interferon gamma receptor 1 from Homo sapiens (Human).